A 557-amino-acid polypeptide reads, in one-letter code: Formate--tetrahydrofolate ligase 2 (557 aa).

66-73 (TPAGEGKT) contributes to the ATP binding site.

It belongs to the formate--tetrahydrofolate ligase family.

The enzyme catalyses (6S)-5,6,7,8-tetrahydrofolate + formate + ATP = (6R)-10-formyltetrahydrofolate + ADP + phosphate. The protein operates within one-carbon metabolism; tetrahydrofolate interconversion. This Streptococcus pyogenes serotype M3 (strain ATCC BAA-595 / MGAS315) protein is Formate--tetrahydrofolate ligase 2.